Reading from the N-terminus, the 299-residue chain is Acetylglutamate kinase (299 aa).

Substrate is bound by residues 70-71 (GG), Arg92, and Asn186.

It belongs to the acetylglutamate kinase family. ArgB subfamily.

The protein localises to the cytoplasm. It carries out the reaction N-acetyl-L-glutamate + ATP = N-acetyl-L-glutamyl 5-phosphate + ADP. The protein operates within amino-acid biosynthesis; L-arginine biosynthesis; N(2)-acetyl-L-ornithine from L-glutamate: step 2/4. Its function is as follows. Catalyzes the ATP-dependent phosphorylation of N-acetyl-L-glutamate. The polypeptide is Acetylglutamate kinase (Caldanaerobacter subterraneus subsp. tengcongensis (strain DSM 15242 / JCM 11007 / NBRC 100824 / MB4) (Thermoanaerobacter tengcongensis)).